The following is a 158-amino-acid chain: Non-secretory ribonuclease (158 aa).

The first 27 residues, 1-27 (MVPKLFTSQICVLLLFGLLSVEVSLQV), serve as a signal peptide directing secretion. A C-linked (Man) tryptophan glycan is attached at W34. The active-site Proton acceptor is the H42. 4 disulfides stabilise this stretch: C50–C110, C64–C121, C82–C136, and C89–C98. Residue Y60 is modified to 3'-nitrotyrosine. 65–69 (KNQNT) serves as a coordination point for substrate. N-linked (GlcNAc...) asparagine glycosylation is found at N86, N92, and N111. H153 acts as the Proton donor in catalysis.

This sequence belongs to the pancreatic ribonuclease family. Interacts with and forms a tight 1:1 complex with RNH1. Dimerization of two such complexes may occur.

The protein localises to the lysosome. Its subcellular location is the cytoplasmic granule. It catalyses the reaction an [RNA] containing cytidine + H2O = an [RNA]-3'-cytidine-3'-phosphate + a 5'-hydroxy-ribonucleotide-3'-[RNA].. The enzyme catalyses an [RNA] containing uridine + H2O = an [RNA]-3'-uridine-3'-phosphate + a 5'-hydroxy-ribonucleotide-3'-[RNA].. Functionally, this is a non-secretory ribonuclease. It is a pyrimidine specific nuclease with a slight preference for U. Cytotoxin and helminthotoxin. Possesses a wide variety of biological activities. The protein is Non-secretory ribonuclease (RNASE2) of Saguinus oedipus (Cotton-top tamarin).